The chain runs to 256 residues: Methylesterase 9 (256 aa).

Catalysis depends on serine 78, which acts as the Acyl-ester intermediate. Residues aspartate 206 and histidine 234 each act as charge relay system in the active site.

The protein belongs to the AB hydrolase superfamily. Methylesterase family.

It catalyses the reaction methyl (indol-3-yl)acetate + H2O = (indol-3-yl)acetate + methanol + H(+). The catalysed reaction is methyl (-)-jasmonate + H2O = jasmonate + methanol + H(+). The enzyme catalyses methyl salicylate + H2O = salicylate + methanol + H(+). The protein operates within plant hormone biosynthesis. It participates in lipid metabolism; oxylipin biosynthesis. Its activity is regulated as follows. Esterase activity is down-regulated by salicylic acid (SA). Functionally, methylesterase shown to have carboxylesterase activity, methyl indole-3-acetic acid (MeIAA) esterase activity, methyl salicylate (MeSA) esterase activity and methyl jasmonate (MeJA) esterase activity in vitro. Required to convert methyl salicylate (MeSA) to salicylic acid (SA) as part of the signal transduction pathways that activate systemic acquired resistance in systemic tissue. MeSA is believed to be an inactive form that needs to be demethylated to exert a biological effect. The protein is Methylesterase 9 of Arabidopsis thaliana (Mouse-ear cress).